The following is a 365-amino-acid chain: Flagellar P-ring protein (365 aa).

A signal peptide spans 1–19; it reads MIKFLSALILLLVTTAAQA.

Belongs to the FlgI family. In terms of assembly, the basal body constitutes a major portion of the flagellar organelle and consists of four rings (L,P,S, and M) mounted on a central rod.

The protein resides in the periplasm. It localises to the bacterial flagellum basal body. In terms of biological role, assembles around the rod to form the L-ring and probably protects the motor/basal body from shearing forces during rotation. In Escherichia coli O9:H4 (strain HS), this protein is Flagellar P-ring protein.